The chain runs to 224 residues: Probable C-&gt;U-editing enzyme APOBEC-2 (224 aa).

Positions 1 to 25 (MAQKEEAAAAAEPASQNGEEVENLE) are disordered. Positions 60 and 98 each coordinate Zn(2+). Residues 64–169 (GRNKTFLCYV…PEIQAALRKL (106 aa)) enclose the CMP/dCMP-type deaminase domain. The Proton donor role is filled by E100. The Zn(2+) site is built by C128 and C131.

The protein belongs to the cytidine and deoxycytidylate deaminase family. As to quaternary structure, homotetramer. Zn(2+) is required as a cofactor.

The enzyme catalyses cytidine(6666) in apoB mRNA + H2O + H(+) = uridine(6666) in apoB mRNA + NH4(+). Probable C to U editing enzyme whose physiological substrate is not yet known. Does not display detectable apoB mRNA editing. Has a low intrinsic cytidine deaminase activity. May play a role in the epigenetic regulation of gene expression through the process of active DNA demethylation. The sequence is that of Probable C-&gt;U-editing enzyme APOBEC-2 (APOBEC2) from Bos taurus (Bovine).